The primary structure comprises 247 residues: ATP synthase subunit a, chloroplastic (247 aa).

Helical transmembrane passes span 38-58, 95-115, 134-154, 199-219, and 220-240; these read QVLI…FIAV, VPFI…GALL, INTT…AGLS, LVVV…VMFL, and GLFT…AYIG.

This sequence belongs to the ATPase A chain family. In terms of assembly, F-type ATPases have 2 components, CF(1) - the catalytic core - and CF(0) - the membrane proton channel. CF(1) has five subunits: alpha(3), beta(3), gamma(1), delta(1), epsilon(1). CF(0) has four main subunits: a, b, b' and c.

Its subcellular location is the plastid. The protein localises to the chloroplast thylakoid membrane. Key component of the proton channel; it plays a direct role in the translocation of protons across the membrane. The sequence is that of ATP synthase subunit a, chloroplastic from Citrus sinensis (Sweet orange).